The sequence spans 269 residues: Bis(5'-nucleosyl)-tetraphosphatase, symmetrical (269 aa).

This sequence belongs to the Ap4A hydrolase family.

The catalysed reaction is P(1),P(4)-bis(5'-adenosyl) tetraphosphate + H2O = 2 ADP + 2 H(+). In terms of biological role, hydrolyzes diadenosine 5',5'''-P1,P4-tetraphosphate to yield ADP. This is Bis(5'-nucleosyl)-tetraphosphatase, symmetrical from Vibrio vulnificus (strain CMCP6).